Consider the following 860-residue polypeptide: Alanine--tRNA ligase (860 aa).

4 residues coordinate Zn(2+): histidine 563, histidine 567, cysteine 665, and histidine 669. The tract at residues 824–843 (VGGKGGGRPDMAQAGGTDSS) is disordered.

This sequence belongs to the class-II aminoacyl-tRNA synthetase family. Requires Zn(2+) as cofactor.

Its subcellular location is the cytoplasm. It carries out the reaction tRNA(Ala) + L-alanine + ATP = L-alanyl-tRNA(Ala) + AMP + diphosphate. In terms of biological role, catalyzes the attachment of alanine to tRNA(Ala) in a two-step reaction: alanine is first activated by ATP to form Ala-AMP and then transferred to the acceptor end of tRNA(Ala). Also edits incorrectly charged Ser-tRNA(Ala) and Gly-tRNA(Ala) via its editing domain. The protein is Alanine--tRNA ligase of Vibrio vulnificus (strain YJ016).